Reading from the N-terminus, the 466-residue chain is CBL-interacting protein kinase 20 (466 aa).

The Protein kinase domain occupies 12-276 (YELGRSLGHG…IDELVKHPWF (265 aa)). ATP-binding positions include 18–26 (LGHGTFSKV) and Lys-41. The Proton acceptor role is filled by Asp-139. Residues 162–191 (DFGLSALSASRRHDGLLHTTCGTPSYVAPE) form an activation loop region. The region spanning 297 to 329 (KPANAAMNMKPASLNAFDIISLSQGFDLSGMFC) is the NAF domain. The PPI stretch occupies residues 337-366 (TQDQLFVTGKPATAIVSRLEEIAETEHFTV). Positions 446 to 466 (ASEKNQLPAVSEVSPLSSPRN) are disordered.

This sequence belongs to the protein kinase superfamily. CAMK Ser/Thr protein kinase family. SNF1 subfamily. The cofactor is Mn(2+).

The catalysed reaction is L-seryl-[protein] + ATP = O-phospho-L-seryl-[protein] + ADP + H(+). It catalyses the reaction L-threonyl-[protein] + ATP = O-phospho-L-threonyl-[protein] + ADP + H(+). In terms of biological role, CIPK serine-threonine protein kinases interact with CBL proteins. Binding of a CBL protein to the regulatory NAF domain of CIPK protein lead to the activation of the kinase in a calcium-dependent manner. This chain is CBL-interacting protein kinase 20 (CIPK20), found in Oryza sativa subsp. japonica (Rice).